A 308-amino-acid chain; its full sequence is MAAVINNAMLEAILAEIRPLIGRGKVADYIPALASVSGDKLGIAISTVDGQHFAAGDAHERFSIQSISKVLSLVVAMNHYQEEEIWQRVGKDPSGQPFNSLLQLEIEQGKPRNPFINAGALVVCDMLQSRLSAPRQRMLEIVRRLSGVADIAYDPVVARSEFEHSARNAAIAWLMKSFGNFHNDVATVLQNYFHYCSLEMSCVELARTFLFLADRGIAPHLEAPVIAPIQSRQVNALMMTSGMYQNAGEFAWRVGLPAKSGVGGGIVAIVPQEMAIAVWSPELDDAGNSLAGVALLEKLTQRMGRSVF.

Ser-66, Asn-117, Glu-161, Asn-168, Tyr-192, Tyr-244, and Val-262 together coordinate substrate.

Belongs to the glutaminase family. As to quaternary structure, homotetramer.

It carries out the reaction L-glutamine + H2O = L-glutamate + NH4(+). The protein is Glutaminase of Klebsiella pneumoniae (strain 342).